The chain runs to 376 residues: Ribosomal RNA large subunit methyltransferase G (376 aa).

The protein belongs to the methyltransferase superfamily. RlmG family.

It is found in the cytoplasm. It catalyses the reaction guanosine(1835) in 23S rRNA + S-adenosyl-L-methionine = N(2)-methylguanosine(1835) in 23S rRNA + S-adenosyl-L-homocysteine + H(+). Its function is as follows. Specifically methylates the guanine in position 1835 (m2G1835) of 23S rRNA. This chain is Ribosomal RNA large subunit methyltransferase G, found in Klebsiella pneumoniae subsp. pneumoniae (strain ATCC 700721 / MGH 78578).